Consider the following 288-residue polypeptide: Eukaryotic translation initiation factor 3 subunit G (288 aa).

The segment at 1–35 (MSRVANNRDWADDEDLEDSNELPQSTTTTNKDGTQ) is disordered. The segment covering 11 to 20 (ADDEDLEDSN) has biased composition (acidic residues). A compositionally biased stretch (polar residues) spans 21–35 (ELPQSTTTTNKDGTQ). The 79-residue stretch at 208-286 (ATLRVTNVSE…LILRVEFAKK (79 aa)) folds into the RRM domain.

It belongs to the eIF-3 subunit G family. In terms of assembly, component of the eukaryotic translation initiation factor 3 (eIF-3) complex.

It is found in the cytoplasm. Its function is as follows. RNA-binding component of the eukaryotic translation initiation factor 3 (eIF-3) complex, which is involved in protein synthesis of a specialized repertoire of mRNAs and, together with other initiation factors, stimulates binding of mRNA and methionyl-tRNAi to the 40S ribosome. The eIF-3 complex specifically targets and initiates translation of a subset of mRNAs involved in cell proliferation. This subunit can bind 18S rRNA. The chain is Eukaryotic translation initiation factor 3 subunit G (tif35) from Botryotinia fuckeliana (strain B05.10) (Noble rot fungus).